The chain runs to 402 residues: Enoyl-[acyl-carrier-protein] reductase [NADH] (402 aa).

Residues 48–53 (GASSGY), 74–75 (FE), 111–112 (DA), and 140–141 (LA) contribute to the NAD(+) site. Tyr226 contributes to the substrate binding site. The active-site Proton donor is the Tyr236. NAD(+)-binding positions include Lys245 and 274–276 (VVT).

The protein belongs to the TER reductase family. In terms of assembly, monomer.

It carries out the reaction a 2,3-saturated acyl-[ACP] + NAD(+) = a (2E)-enoyl-[ACP] + NADH + H(+). The enzyme catalyses a 2,3-saturated acyl-CoA + NAD(+) = a (2E)-enoyl-CoA + NADH + H(+). The protein operates within lipid metabolism; fatty acid biosynthesis. Involved in the final reduction of the elongation cycle of fatty acid synthesis (FAS II). Catalyzes the reduction of a carbon-carbon double bond in an enoyl moiety that is covalently linked to an acyl carrier protein (ACP). It can also use crotonyl-CoA. The polypeptide is Enoyl-[acyl-carrier-protein] reductase [NADH] (Xanthomonas oryzae pv. oryzae (strain MAFF 311018)).